Reading from the N-terminus, the 381-residue chain is Putative 8-amino-7-oxononanoate synthase (381 aa).

Arginine 22 contacts substrate. 109-110 (GF) contributes to the pyridoxal 5'-phosphate binding site. A substrate-binding site is contributed by histidine 134. Pyridoxal 5'-phosphate is bound by residues serine 182, 207-210 (DDAH), and 233-236 (TLSK). Lysine 236 is modified (N6-(pyridoxal phosphate)lysine). Threonine 345 is a substrate binding site.

The protein belongs to the class-II pyridoxal-phosphate-dependent aminotransferase family. BioF subfamily. As to quaternary structure, homodimer. Pyridoxal 5'-phosphate is required as a cofactor.

It catalyses the reaction 6-carboxyhexanoyl-[ACP] + L-alanine + H(+) = (8S)-8-amino-7-oxononanoate + holo-[ACP] + CO2. Its pathway is cofactor biosynthesis; biotin biosynthesis. Its function is as follows. Catalyzes the decarboxylative condensation of pimeloyl-[acyl-carrier protein] and L-alanine to produce 8-amino-7-oxononanoate (AON), [acyl-carrier protein], and carbon dioxide. This is Putative 8-amino-7-oxononanoate synthase (bioF) from Acidiphilium cryptum (strain JF-5).